Here is a 194-residue protein sequence, read N- to C-terminus: Orotate phosphoribosyltransferase (194 aa).

Residue 116-124 (EDIVTTGLS) coordinates 5-phospho-alpha-D-ribose 1-diphosphate. Orotate-binding residues include T120 and R148.

This sequence belongs to the purine/pyrimidine phosphoribosyltransferase family. PyrE subfamily. In terms of assembly, homodimer. Mg(2+) serves as cofactor.

It catalyses the reaction orotidine 5'-phosphate + diphosphate = orotate + 5-phospho-alpha-D-ribose 1-diphosphate. It functions in the pathway pyrimidine metabolism; UMP biosynthesis via de novo pathway; UMP from orotate: step 1/2. Functionally, catalyzes the transfer of a ribosyl phosphate group from 5-phosphoribose 1-diphosphate to orotate, leading to the formation of orotidine monophosphate (OMP). In Phenylobacterium zucineum (strain HLK1), this protein is Orotate phosphoribosyltransferase.